The primary structure comprises 86 residues: Large ribosomal subunit protein bL31m (86 aa).

The N-terminal 18 residues, 1 to 18, are a transit peptide targeting the mitochondrion; sequence MKCSLRLFEKAGRLSVRS.

The protein belongs to the bacterial ribosomal protein bL31 family. Highly divergent. As to quaternary structure, component of the mitochondrial large ribosomal subunit (mt-LSU). Mature yeast 74S mitochondrial ribosomes consist of a small (37S) and a large (54S) subunit. The 37S small subunit contains a 15S ribosomal RNA (15S mt-rRNA) and at least 32 different proteins. The 54S large subunit contains a 21S rRNA (21S mt-rRNA) and at least 45 different proteins.

Its subcellular location is the mitochondrion. Its function is as follows. Component of the mitochondrial ribosome (mitoribosome), a dedicated translation machinery responsible for the synthesis of mitochondrial genome-encoded proteins, including at least some of the essential transmembrane subunits of the mitochondrial respiratory chain. The mitoribosomes are attached to the mitochondrial inner membrane and translation products are cotranslationally integrated into the membrane. In Schizosaccharomyces pombe (strain 972 / ATCC 24843) (Fission yeast), this protein is Large ribosomal subunit protein bL31m (tam9).